The primary structure comprises 122 residues: Large ribosomal subunit protein uL18 (122 aa).

Belongs to the universal ribosomal protein uL18 family. Part of the 50S ribosomal subunit; part of the 5S rRNA/L5/L18/L25 subcomplex. Contacts the 5S and 23S rRNAs.

This is one of the proteins that bind and probably mediate the attachment of the 5S RNA into the large ribosomal subunit, where it forms part of the central protuberance. In Prochlorococcus marinus (strain MIT 9515), this protein is Large ribosomal subunit protein uL18.